The chain runs to 261 residues: Cytochrome c oxidase subunit 3 (261 aa).

Residues 1–15 lie on the Mitochondrial matrix side of the membrane; it reads MTHQTHAYHMVNPSP. A helical membrane pass occupies residues 16 to 34; it reads WPLTGALSALLMTSGLIMW. Over 35-40 the chain is Mitochondrial intermembrane; sequence FHFNST. The helical transmembrane segment at 41 to 66 threads the bilayer; sequence ALLMLGLTTNMLTMYQWWRDIVREST. Topologically, residues 67 to 72 are mitochondrial matrix; it reads FQGHHT. Residues 73-105 traverse the membrane as a helical segment; that stretch reads PTVQKGLRYGMILFIISEVLFFTGFFWAFYHSS. At 106–128 the chain is on the mitochondrial intermembrane side; sequence LAPTPELGGCWPPTGIHPLNPLE. The helical transmembrane segment at 129–152 threads the bilayer; the sequence is VPLLNTSVLLASGVSITWAHHSLM. Residues 153–155 are Mitochondrial matrix-facing; that stretch reads EGN. Residues 156–183 traverse the membrane as a helical segment; it reads RNHMLQALFITIALGVYFTLLQASEYYE. Over 184-190 the chain is Mitochondrial intermembrane; the sequence is APFTISD. Residues 191-223 traverse the membrane as a helical segment; sequence GVYGSTFFVATGFHGLHVIIGSTFLIVCFFRQL. The Mitochondrial matrix portion of the chain corresponds to 224-232; it reads KFHFTSNHH. A helical membrane pass occupies residues 233 to 256; the sequence is FGFEAAAWYWHFVDVVWLFLYVSI. The Mitochondrial intermembrane segment spans residues 257-261; it reads YWWGS.

This sequence belongs to the cytochrome c oxidase subunit 3 family. In terms of assembly, component of the cytochrome c oxidase (complex IV, CIV), a multisubunit enzyme composed of 14 subunits. The complex is composed of a catalytic core of 3 subunits MT-CO1, MT-CO2 and MT-CO3, encoded in the mitochondrial DNA, and 11 supernumerary subunits COX4I, COX5A, COX5B, COX6A, COX6B, COX6C, COX7A, COX7B, COX7C, COX8 and NDUFA4, which are encoded in the nuclear genome. The complex exists as a monomer or a dimer and forms supercomplexes (SCs) in the inner mitochondrial membrane with NADH-ubiquinone oxidoreductase (complex I, CI) and ubiquinol-cytochrome c oxidoreductase (cytochrome b-c1 complex, complex III, CIII), resulting in different assemblies (supercomplex SCI(1)III(2)IV(1) and megacomplex MCI(2)III(2)IV(2)).

It is found in the mitochondrion inner membrane. The catalysed reaction is 4 Fe(II)-[cytochrome c] + O2 + 8 H(+)(in) = 4 Fe(III)-[cytochrome c] + 2 H2O + 4 H(+)(out). Component of the cytochrome c oxidase, the last enzyme in the mitochondrial electron transport chain which drives oxidative phosphorylation. The respiratory chain contains 3 multisubunit complexes succinate dehydrogenase (complex II, CII), ubiquinol-cytochrome c oxidoreductase (cytochrome b-c1 complex, complex III, CIII) and cytochrome c oxidase (complex IV, CIV), that cooperate to transfer electrons derived from NADH and succinate to molecular oxygen, creating an electrochemical gradient over the inner membrane that drives transmembrane transport and the ATP synthase. Cytochrome c oxidase is the component of the respiratory chain that catalyzes the reduction of oxygen to water. Electrons originating from reduced cytochrome c in the intermembrane space (IMS) are transferred via the dinuclear copper A center (CU(A)) of subunit 2 and heme A of subunit 1 to the active site in subunit 1, a binuclear center (BNC) formed by heme A3 and copper B (CU(B)). The BNC reduces molecular oxygen to 2 water molecules using 4 electrons from cytochrome c in the IMS and 4 protons from the mitochondrial matrix. The protein is Cytochrome c oxidase subunit 3 (MT-CO3) of Cephalophorus natalensis (Natal red duiker).